A 1059-amino-acid polypeptide reads, in one-letter code: Isoleucine--tRNA ligase (1059 aa).

A 'HIGH' region motif is present at residues 47-57; that stretch reads PYTSGQMHLGT. The 'KMSKS' region signature appears at 606-610; that stretch reads KMSKS. Lys609 serves as a coordination point for ATP.

The protein belongs to the class-I aminoacyl-tRNA synthetase family. IleS type 2 subfamily. In terms of assembly, monomer. Zn(2+) serves as cofactor.

The protein localises to the cytoplasm. The catalysed reaction is tRNA(Ile) + L-isoleucine + ATP = L-isoleucyl-tRNA(Ile) + AMP + diphosphate. Catalyzes the attachment of isoleucine to tRNA(Ile). As IleRS can inadvertently accommodate and process structurally similar amino acids such as valine, to avoid such errors it has two additional distinct tRNA(Ile)-dependent editing activities. One activity is designated as 'pretransfer' editing and involves the hydrolysis of activated Val-AMP. The other activity is designated 'posttransfer' editing and involves deacylation of mischarged Val-tRNA(Ile). In Haloquadratum walsbyi (strain DSM 16790 / HBSQ001), this protein is Isoleucine--tRNA ligase.